Here is a 392-residue protein sequence, read N- to C-terminus: Succinyl-diaminopimelate desuccinylase (392 aa).

Histidine 78 is a Zn(2+) binding site. Residue aspartate 80 is part of the active site. Aspartate 110 lines the Zn(2+) pocket. Glutamate 145 functions as the Proton acceptor in the catalytic mechanism. Glutamate 146, glutamate 174, and histidine 363 together coordinate Zn(2+).

It belongs to the peptidase M20A family. DapE subfamily. In terms of assembly, homodimer. Zn(2+) is required as a cofactor. The cofactor is Co(2+).

It carries out the reaction N-succinyl-(2S,6S)-2,6-diaminopimelate + H2O = (2S,6S)-2,6-diaminopimelate + succinate. Its pathway is amino-acid biosynthesis; L-lysine biosynthesis via DAP pathway; LL-2,6-diaminopimelate from (S)-tetrahydrodipicolinate (succinylase route): step 3/3. Functionally, catalyzes the hydrolysis of N-succinyl-L,L-diaminopimelic acid (SDAP), forming succinate and LL-2,6-diaminopimelate (DAP), an intermediate involved in the bacterial biosynthesis of lysine and meso-diaminopimelic acid, an essential component of bacterial cell walls. This Methylobacterium radiotolerans (strain ATCC 27329 / DSM 1819 / JCM 2831 / NBRC 15690 / NCIMB 10815 / 0-1) protein is Succinyl-diaminopimelate desuccinylase.